A 236-amino-acid polypeptide reads, in one-letter code: Small ribosomal subunit protein uS2c (236 aa).

The protein belongs to the universal ribosomal protein uS2 family.

It localises to the plastid. The sequence is that of Small ribosomal subunit protein uS2c (rps2) from Cuscuta obtusiflora (Peruvian dodder).